The primary structure comprises 408 residues: Serine-rich antigen (408 aa).

Tandem repeats lie at residues 209–214 and 230–235. The interval 209–235 is 2 X 6 AA repeats of S-V-A-Q-S-E; sequence SVAQSEEHGSDSMSQSYNTCGSVAQSE.

Belongs to the mycobacterial PPE family.

This Mycobacterium leprae (strain TN) protein is Serine-rich antigen (sra).